The chain runs to 334 residues: Methionine adenosyltransferase 2 subunit beta (334 aa).

NADP(+) is bound by residues threonine 37–leucine 40, phenylalanine 60–arginine 62, asparagine 71–leucine 72, cysteine 93, arginine 97, tyrosine 159, and leucine 185. A Phosphothreonine modification is found at threonine 309. The required for interaction with MAT2A stretch occupies residues leucine 319 to histidine 334.

It belongs to the dTDP-4-dehydrorhamnose reductase family. MAT2B subfamily. In terms of assembly, heterotrimer; composed of a catalytic MAT2A homodimer that binds one regulatory MAT2B chain. Heterohexamer; composed of a central, catalytic MAT2A homotetramer flanked on either side by a regulatory MAT2B chain. NADP binding increases the affinity for MAT2A.

It functions in the pathway amino-acid biosynthesis; S-adenosyl-L-methionine biosynthesis; S-adenosyl-L-methionine from L-methionine: step 1/1. Functionally, regulatory subunit of S-adenosylmethionine synthetase 2, an enzyme that catalyzes the formation of S-adenosylmethionine from methionine and ATP. Regulates MAT2A catalytic activity by changing its kinetic properties, increasing its affinity for L-methionine. Can bind NADP (in vitro). The chain is Methionine adenosyltransferase 2 subunit beta (MAT2B) from Bos taurus (Bovine).